Here is a 99-residue protein sequence, read N- to C-terminus: Putative endopeptidase RzpR (99 aa).

The protein is Putative endopeptidase RzpR (rzpR) of Escherichia coli (strain K12).